Consider the following 301-residue polypeptide: MSIDKSYCGFIAIVGRPNVGKSTLLNKLLGQKISITSRKAQTTRHRIVGIHTEGAYQAIYVDTPGLHMEEKRAINRLMNKAASSSIGDVELVIFVVEGTRWTPDDEMVLNKLRDGKAPVILAVNKVDNVQEKADLLPHLQFLASQMNFLDIVPISAETGLNVDTIAAIVRKHLPEATHHFPEDYITDRSQRFMASEIIREKLMRFLGAELPYSVTVEIERFVSNERGGYDINGLILVEREGQKKMVIGNKGAKIKTIGIEARKDMQEMFEAPVHLELWVKVKSGWADDERALRSLGYVDDL.

The 169-residue stretch at 7–175 (YCGFIAIVGR…AAIVRKHLPE (169 aa)) folds into the Era-type G domain. Residues 15–22 (GRPNVGKS) are G1. 15 to 22 (GRPNVGKS) contacts GTP. Residues 41–45 (QTTRH) form a G2 region. Positions 62–65 (DTPG) are G3. GTP contacts are provided by residues 62-66 (DTPGL) and 124-127 (NKVD). The interval 124-127 (NKVD) is G4. Positions 154–156 (ISA) are G5. A KH type-2 domain is found at 206–283 (LGAELPYSVT…HLELWVKVKS (78 aa)).

Belongs to the TRAFAC class TrmE-Era-EngA-EngB-Septin-like GTPase superfamily. Era GTPase family. In terms of assembly, monomer.

Its subcellular location is the cytoplasm. It localises to the cell inner membrane. In terms of biological role, an essential GTPase that binds both GDP and GTP, with rapid nucleotide exchange. Plays a role in 16S rRNA processing and 30S ribosomal subunit biogenesis and possibly also in cell cycle regulation and energy metabolism. The protein is GTPase Era of Escherichia coli O1:K1 / APEC.